Consider the following 253-residue polypeptide: Imidazole glycerol phosphate synthase subunit HisF (253 aa).

Catalysis depends on residues D11 and D130.

This sequence belongs to the HisA/HisF family. In terms of assembly, heterodimer of HisH and HisF.

Its subcellular location is the cytoplasm. The enzyme catalyses 5-[(5-phospho-1-deoxy-D-ribulos-1-ylimino)methylamino]-1-(5-phospho-beta-D-ribosyl)imidazole-4-carboxamide + L-glutamine = D-erythro-1-(imidazol-4-yl)glycerol 3-phosphate + 5-amino-1-(5-phospho-beta-D-ribosyl)imidazole-4-carboxamide + L-glutamate + H(+). It participates in amino-acid biosynthesis; L-histidine biosynthesis; L-histidine from 5-phospho-alpha-D-ribose 1-diphosphate: step 5/9. In terms of biological role, IGPS catalyzes the conversion of PRFAR and glutamine to IGP, AICAR and glutamate. The HisF subunit catalyzes the cyclization activity that produces IGP and AICAR from PRFAR using the ammonia provided by the HisH subunit. The polypeptide is Imidazole glycerol phosphate synthase subunit HisF (Opitutus terrae (strain DSM 11246 / JCM 15787 / PB90-1)).